Reading from the N-terminus, the 148-residue chain is Deoxyuridine 5'-triphosphate nucleotidohydrolase (148 aa).

Substrate-binding positions include 67–69 (RSG), Asn80, 84–86 (LID), and Met94.

The protein belongs to the dUTPase family. Mg(2+) is required as a cofactor.

The catalysed reaction is dUTP + H2O = dUMP + diphosphate + H(+). It participates in pyrimidine metabolism; dUMP biosynthesis; dUMP from dCTP (dUTP route): step 2/2. Its function is as follows. This enzyme is involved in nucleotide metabolism: it produces dUMP, the immediate precursor of thymidine nucleotides and it decreases the intracellular concentration of dUTP so that uracil cannot be incorporated into DNA. In Francisella tularensis subsp. tularensis (strain FSC 198), this protein is Deoxyuridine 5'-triphosphate nucleotidohydrolase.